A 257-amino-acid chain; its full sequence is Imidazole glycerol phosphate synthase subunit HisF (257 aa).

Residues D12 and D131 contribute to the active site.

This sequence belongs to the HisA/HisF family. In terms of assembly, heterodimer of HisH and HisF.

The protein resides in the cytoplasm. It carries out the reaction 5-[(5-phospho-1-deoxy-D-ribulos-1-ylimino)methylamino]-1-(5-phospho-beta-D-ribosyl)imidazole-4-carboxamide + L-glutamine = D-erythro-1-(imidazol-4-yl)glycerol 3-phosphate + 5-amino-1-(5-phospho-beta-D-ribosyl)imidazole-4-carboxamide + L-glutamate + H(+). The protein operates within amino-acid biosynthesis; L-histidine biosynthesis; L-histidine from 5-phospho-alpha-D-ribose 1-diphosphate: step 5/9. Functionally, IGPS catalyzes the conversion of PRFAR and glutamine to IGP, AICAR and glutamate. The HisF subunit catalyzes the cyclization activity that produces IGP and AICAR from PRFAR using the ammonia provided by the HisH subunit. This chain is Imidazole glycerol phosphate synthase subunit HisF, found in Saccharophagus degradans (strain 2-40 / ATCC 43961 / DSM 17024).